A 106-amino-acid chain; its full sequence is Small ribosomal subunit protein bS20 (106 aa).

The segment at 1–32 (MAQKKPKRNLSALKRHRQSLKRRLRNKAKKSA) is disordered.

As to quaternary structure, part of the 30S ribosomal subunit.

One of the primary rRNA binding proteins, it binds directly to 16S rRNA where it nucleates assembly of the bottom of the body of the 30S subunit, by binding to several RNA helices of the 16S rRNA. In Thermus thermophilus (strain ATCC 27634 / DSM 579 / HB8), this protein is Small ribosomal subunit protein bS20 (rpsT).